The following is a 675-amino-acid chain: Transketolase, chloroplastic (675 aa).

Thiamine diphosphate-binding positions include histidine 78 and 127–129 (GPL). Aspartate 168 serves as a coordination point for Mg(2+). Residues glycine 169, glutamate 173, and asparagine 198 each contribute to the thiamine diphosphate site. Positions 198 and 200 each coordinate Mg(2+). Thiamine diphosphate is bound at residue histidine 275. Histidine 275, arginine 369, and serine 396 together coordinate substrate. Thiamine diphosphate is bound by residues glutamate 423 and 450–453 (FTDY). Glutamate 423 acts as the Proton donor in catalysis. Positions 474, 482, and 533 each coordinate substrate.

As to quaternary structure, homodimer. Mg(2+) is required as a cofactor. Requires Ca(2+) as cofactor. The cofactor is Mn(2+). It depends on Co(2+) as a cofactor. Thiamine diphosphate serves as cofactor.

It localises to the plastid. The protein localises to the chloroplast thylakoid membrane. It carries out the reaction D-sedoheptulose 7-phosphate + D-glyceraldehyde 3-phosphate = aldehydo-D-ribose 5-phosphate + D-xylulose 5-phosphate. The protein operates within carbohydrate biosynthesis; Calvin cycle. Its function is as follows. Catalyzes the reversible transfer of a two-carbon ketol group from fructose-6-phosphate or sedoheptulose-7-phosphate to glyceraldehyde-3-phosphate to yield xylulose-5-phosphate and erythrose-4-phosphate or ribose-5-phosphate, respectively. In Zea mays (Maize), this protein is Transketolase, chloroplastic.